The following is a 220-amino-acid chain: Ribose-5-phosphate isomerase A (220 aa).

Substrate contacts are provided by residues 25-28 (TGST), 80-83 (DGAD), and 93-96 (KGGG). E102 functions as the Proton acceptor in the catalytic mechanism. K120 contributes to the substrate binding site.

This sequence belongs to the ribose 5-phosphate isomerase family. Homodimer.

It catalyses the reaction aldehydo-D-ribose 5-phosphate = D-ribulose 5-phosphate. The protein operates within carbohydrate degradation; pentose phosphate pathway; D-ribose 5-phosphate from D-ribulose 5-phosphate (non-oxidative stage): step 1/1. In terms of biological role, catalyzes the reversible conversion of ribose-5-phosphate to ribulose 5-phosphate. This chain is Ribose-5-phosphate isomerase A, found in Bacillus anthracis.